A 65-amino-acid polypeptide reads, in one-letter code: Large ribosomal subunit protein bL35 (65 aa).

Residues 1–26 (MPKIKTLRSAAKRFKKTESGKFKRKQ) are disordered.

The protein belongs to the bacterial ribosomal protein bL35 family.

The chain is Large ribosomal subunit protein bL35 from Buchnera aphidicola subsp. Baizongia pistaciae (strain Bp).